The chain runs to 365 residues: Alanine racemase (365 aa).

The active-site Proton acceptor; specific for D-alanine is Lys-36. Position 36 is an N6-(pyridoxal phosphate)lysine (Lys-36). Arg-132 lines the substrate pocket. The Proton acceptor; specific for L-alanine role is filled by Tyr-257. Position 305 (Met-305) interacts with substrate.

It belongs to the alanine racemase family. Pyridoxal 5'-phosphate is required as a cofactor.

It catalyses the reaction L-alanine = D-alanine. It participates in amino-acid biosynthesis; D-alanine biosynthesis; D-alanine from L-alanine: step 1/1. Its function is as follows. Catalyzes the interconversion of L-alanine and D-alanine. May also act on other amino acids. The sequence is that of Alanine racemase (alr) from Xylella fastidiosa (strain Temecula1 / ATCC 700964).